The primary structure comprises 600 residues: Keratin, type II cuticular Hb4 (600 aa).

The tract at residues M1 to E165 is head. The region spanning E165–L476 is the IF rod domain. Residues K166–L200 are coil 1A. The segment at Q201–L210 is linker 1. The coil 1B stretch occupies residues E211–S311. The tract at residues H312–L328 is linker 12. A coil 2 region spans residues N329–E472. The tail stretch occupies residues E473 to Y600.

The protein belongs to the intermediate filament family. As to quaternary structure, heterotetramer of two type I and two type II keratins. In terms of tissue distribution, expressed in the hair follicles.

The polypeptide is Keratin, type II cuticular Hb4 (KRT84) (Homo sapiens (Human)).